The following is a 322-amino-acid chain: MYTLEEIKNQLGLKSEKKSIVFPEAESEIIQSVAKTLVDEKLGLPILLFKSSKEVPSEIKNNSSIKTICLDEFDTKEFEEEFVKLRKGKATIEVAHQVMQLPNYIGAMLVKLNQADCMLSGLNNTTADTIRPALQIIGTKPGYNIASSIFVMSKGNENYIFTDCALNIKPTSEQLVEITQMAVDFAKALNVKNVEAALLSYSTNGSGKGEDVDRVHQAVEILKSKEKDYVCEGEIQFDAAFDKKTRDKKFKNCSLLKQTPDIFVFPDINAGNIGYKIAQRMGGFEAIGPFVLGLNQPVNDLSRGATFVDVLNTAIMTLYLSY.

The protein belongs to the phosphate acetyltransferase and butyryltransferase family.

It is found in the cytoplasm. The catalysed reaction is acetyl-CoA + phosphate = acetyl phosphate + CoA. It functions in the pathway metabolic intermediate biosynthesis; acetyl-CoA biosynthesis; acetyl-CoA from acetate: step 2/2. The polypeptide is Phosphate acetyltransferase (pta) (Mycoplasma capricolum subsp. capricolum (strain California kid / ATCC 27343 / NCTC 10154)).